The chain runs to 204 residues: ATP-dependent Clp protease proteolytic subunit (204 aa).

The active-site Nucleophile is S102. Residue H127 is part of the active site.

The protein belongs to the peptidase S14 family. As to quaternary structure, fourteen ClpP subunits assemble into 2 heptameric rings which stack back to back to give a disk-like structure with a central cavity, resembling the structure of eukaryotic proteasomes.

The protein resides in the cytoplasm. The enzyme catalyses Hydrolysis of proteins to small peptides in the presence of ATP and magnesium. alpha-casein is the usual test substrate. In the absence of ATP, only oligopeptides shorter than five residues are hydrolyzed (such as succinyl-Leu-Tyr-|-NHMec, and Leu-Tyr-Leu-|-Tyr-Trp, in which cleavage of the -Tyr-|-Leu- and -Tyr-|-Trp bonds also occurs).. Its function is as follows. Cleaves peptides in various proteins in a process that requires ATP hydrolysis. Has a chymotrypsin-like activity. Plays a major role in the degradation of misfolded proteins. The sequence is that of ATP-dependent Clp protease proteolytic subunit from Neisseria meningitidis serogroup A / serotype 4A (strain DSM 15465 / Z2491).